The primary structure comprises 237 residues: MPNAYKRVLLKLSGEALMGDDAFGINRATIERMVADIAEVVRLGTQLAVVIGGGNIFRGVAGGAAGMDRATADYMGMLATMMNALALQDAMRHAGIEARVQSALRMDQVVEPYIRPRAIRQLEEGKVVIFAAGTGNPFFTTDTAAALRGSEVGAEVVLKATKVDGVYSADPKKDPSATRYSSISFDEAIGRNLQVMDATAFALCRDQKLPIRVFSINKPGALKRIVQGEDEGTLVHV.

11-14 contacts ATP; that stretch reads KLSG. UMP is bound at residue G53. 2 residues coordinate ATP: G54 and R58. UMP is bound by residues D73 and 134-141; that span reads TGNPFFTT. The ATP site is built by T161, Y167, and D170.

This sequence belongs to the UMP kinase family. As to quaternary structure, homohexamer.

Its subcellular location is the cytoplasm. It carries out the reaction UMP + ATP = UDP + ADP. The protein operates within pyrimidine metabolism; CTP biosynthesis via de novo pathway; UDP from UMP (UMPK route): step 1/1. Inhibited by UTP. In terms of biological role, catalyzes the reversible phosphorylation of UMP to UDP. The polypeptide is Uridylate kinase (Burkholderia mallei (strain NCTC 10247)).